Here is a 545-residue protein sequence, read N- to C-terminus: tRNA-2-methylthio-N(6)-dimethylallyladenosine synthase (545 aa).

The segment at 1–32 (MSSASPLARCCDEATPSAGPRAAQPPYHGPVT) is disordered. An MTTase N-terminal domain is found at 58-174 (RTYQVRTYGC…LPTLLERARH (117 aa)). [4Fe-4S] cluster contacts are provided by cysteine 67, cysteine 103, cysteine 137, cysteine 211, cysteine 215, and cysteine 218. Positions 197–433 (RESAYAAWVS…IALQEQISLE (237 aa)) constitute a Radical SAM core domain. One can recognise a TRAM domain in the interval 436–504 (RALVGQAVEV…PHHLIADAGV (69 aa)).

Belongs to the methylthiotransferase family. MiaB subfamily. As to quaternary structure, monomer. Requires [4Fe-4S] cluster as cofactor.

It is found in the cytoplasm. It carries out the reaction N(6)-dimethylallyladenosine(37) in tRNA + (sulfur carrier)-SH + AH2 + 2 S-adenosyl-L-methionine = 2-methylsulfanyl-N(6)-dimethylallyladenosine(37) in tRNA + (sulfur carrier)-H + 5'-deoxyadenosine + L-methionine + A + S-adenosyl-L-homocysteine + 2 H(+). Functionally, catalyzes the methylthiolation of N6-(dimethylallyl)adenosine (i(6)A), leading to the formation of 2-methylthio-N6-(dimethylallyl)adenosine (ms(2)i(6)A) at position 37 in tRNAs that read codons beginning with uridine. The protein is tRNA-2-methylthio-N(6)-dimethylallyladenosine synthase of Mycobacterium bovis (strain BCG / Pasteur 1173P2).